The chain runs to 348 residues: Phosphatidylglycerophosphate phosphatase 1, chloroplastic/mitochondrial (348 aa).

The N-terminal 58 residues, 1–58, are a transit peptide targeting the chloroplast and mitochondrion; the sequence is MQTPSMAASTTSYYPIPKSFLLSPPRHKRNPNLISCSTKPICSPPPPSSSSSSPLQTT. The disordered stretch occupies residues 17-67; sequence PKSFLLSPPRHKRNPNLISCSTKPICSPPPPSSSSSSPLQTTTTHRSQKQN. A compositionally biased stretch (polar residues) spans 55–67; that stretch reads LQTTTTHRSQKQN. The short motif at 184 to 188 is the Phosphoryl acceptor element; the sequence is DKDNT.

Belongs to the HAD-like hydrolase superfamily. Mg(2+) serves as cofactor. In terms of tissue distribution, mainly expressed in inflorescences (especially in pollen) and, to a lower extent, in leaves, stems and siliques, as well as, at low levels, in roots. Mostly expressed in hypocotyl, vasculatures, trichomes, guard cells and stigmas.

It localises to the plastid. It is found in the chloroplast. Its subcellular location is the mitochondrion. The catalysed reaction is a 1,2-diacyl-sn-glycero-3-phospho-(1'-sn-glycero-3'-phosphate) + H2O = a 1,2-diacyl-sn-glycero-3-phospho-(1'-sn-glycerol) + phosphate. It functions in the pathway phospholipid metabolism; phosphatidylglycerol biosynthesis; phosphatidylglycerol from CDP-diacylglycerol: step 2/2. Phosphatidylglycerophosphate (PGP) phosphatase involved in the biosynthesis of phosphatidylglycerol (PG), a phosphoglycerolipid predominantly present in chloroplastic thylakoid membranes and which has important photosynthetic function; seems to use PGP 34:3, PGP 34:2 and PGP 34:1 as substrates. Required for thylakoid membranes development and chloroplast function. Necessary for normal cell growth. Required for root growth and columella cells organization. The chain is Phosphatidylglycerophosphate phosphatase 1, chloroplastic/mitochondrial from Arabidopsis thaliana (Mouse-ear cress).